The sequence spans 315 residues: Probable cell division protein WhiA (315 aa).

The H-T-H motif DNA-binding region spans 280 to 313 (SLKELGEMLDPPVGKSGINHRLRKIEKIAEELRT).

Belongs to the WhiA family.

Its function is as follows. Involved in cell division and chromosome segregation. The protein is Probable cell division protein WhiA of Clostridium beijerinckii (strain ATCC 51743 / NCIMB 8052) (Clostridium acetobutylicum).